A 201-amino-acid chain; its full sequence is 3-mercaptopropionate dioxygenase (201 aa).

Histidine 89, histidine 91, and histidine 142 together coordinate Fe cation.

This sequence belongs to the cysteine dioxygenase family. In terms of assembly, forms homodimer in the crystal; however, there is no evidence that the dimer exists under physiological conditions or has biological significance. Fe(2+) serves as cofactor.

It catalyses the reaction 3-sulfanylpropanoate + O2 = 3-sulfinopropanoate + H(+). Functionally, thiol dioxygenase that catalyzes the dioxygenation of 3-mercaptopropionate (3-MPA) to 3-sulfinopropionate (3-SPA). To a lesser extent (40-fold lower efficiency), is also able to oxidize cysteine to cysteine sulfinate (CSA). Cannot use N-acetyl-L-cysteine, homocysteine, and cysteamine as substrates. The physiological role of this enzyme is unclear. The polypeptide is 3-mercaptopropionate dioxygenase (Pseudomonas aeruginosa (strain ATCC 15692 / DSM 22644 / CIP 104116 / JCM 14847 / LMG 12228 / 1C / PRS 101 / PAO1)).